Reading from the N-terminus, the 106-residue chain is uncharacterized protein (106 aa).

2 disordered regions span residues 27–47 and 83–106; these read FSDS…DVSD and SPAM…VQSK. Residues 29–39 are compositionally biased toward acidic residues; that stretch reads DSEDEPDDEAS. The span at 94–106 shows a compositional bias: basic and acidic residues; the sequence is GIEREDRGGVQSK.

It is found in the mitochondrion. This is an uncharacterized protein from Arabidopsis thaliana (Mouse-ear cress).